Consider the following 225-residue polypeptide: Thymidylate kinase (225 aa).

12-19 provides a ligand contact to ATP; that stretch reads GGEGAGKS.

Belongs to the thymidylate kinase family.

It catalyses the reaction dTMP + ATP = dTDP + ADP. Functionally, phosphorylation of dTMP to form dTDP in both de novo and salvage pathways of dTTP synthesis. The protein is Thymidylate kinase of Chelativorans sp. (strain BNC1).